The sequence spans 265 residues: Phosphate import ATP-binding protein PstB (265 aa).

One can recognise an ABC transporter domain in the interval I18–I260. G50–S57 is an ATP binding site.

It belongs to the ABC transporter superfamily. Phosphate importer (TC 3.A.1.7) family. In terms of assembly, the complex is composed of two ATP-binding proteins (PstB), two transmembrane proteins (PstC and PstA) and a solute-binding protein (PstS).

The protein resides in the cell inner membrane. It catalyses the reaction phosphate(out) + ATP + H2O = ADP + 2 phosphate(in) + H(+). In terms of biological role, part of the ABC transporter complex PstSACB involved in phosphate import. Responsible for energy coupling to the transport system. In Ruegeria sp. (strain TM1040) (Silicibacter sp.), this protein is Phosphate import ATP-binding protein PstB.